The following is a 739-amino-acid chain: Phosphoribosylformylglycinamidine synthase subunit PurL (739 aa).

H54 is an active-site residue. ATP-binding residues include Y57 and K96. E98 lines the Mg(2+) pocket. Residues 99 to 102 and R121 contribute to the substrate site; that span reads SHNH. The active-site Proton acceptor is H100. D122 contributes to the Mg(2+) binding site. Position 245 (Q245) interacts with substrate. D273 lines the Mg(2+) pocket. 317–319 is a binding site for substrate; the sequence is ESQ. The ATP site is built by D500 and G537. N538 provides a ligand contact to Mg(2+). S540 provides a ligand contact to substrate.

It belongs to the FGAMS family. As to quaternary structure, monomer. Part of the FGAM synthase complex composed of 1 PurL, 1 PurQ and 2 PurS subunits.

It localises to the cytoplasm. The enzyme catalyses N(2)-formyl-N(1)-(5-phospho-beta-D-ribosyl)glycinamide + L-glutamine + ATP + H2O = 2-formamido-N(1)-(5-O-phospho-beta-D-ribosyl)acetamidine + L-glutamate + ADP + phosphate + H(+). It functions in the pathway purine metabolism; IMP biosynthesis via de novo pathway; 5-amino-1-(5-phospho-D-ribosyl)imidazole from N(2)-formyl-N(1)-(5-phospho-D-ribosyl)glycinamide: step 1/2. Functionally, part of the phosphoribosylformylglycinamidine synthase complex involved in the purines biosynthetic pathway. Catalyzes the ATP-dependent conversion of formylglycinamide ribonucleotide (FGAR) and glutamine to yield formylglycinamidine ribonucleotide (FGAM) and glutamate. The FGAM synthase complex is composed of three subunits. PurQ produces an ammonia molecule by converting glutamine to glutamate. PurL transfers the ammonia molecule to FGAR to form FGAM in an ATP-dependent manner. PurS interacts with PurQ and PurL and is thought to assist in the transfer of the ammonia molecule from PurQ to PurL. In Bacillus cytotoxicus (strain DSM 22905 / CIP 110041 / 391-98 / NVH 391-98), this protein is Phosphoribosylformylglycinamidine synthase subunit PurL.